Reading from the N-terminus, the 212-residue chain is Ribosome maturation factor RimP (212 aa).

It belongs to the RimP family.

It is found in the cytoplasm. Its function is as follows. Required for maturation of 30S ribosomal subunits. The polypeptide is Ribosome maturation factor RimP (Variovorax paradoxus (strain S110)).